The sequence spans 115 residues: Parathyroid hormone (115 aa).

A signal peptide spans 1 to 25 (MMSASTMAKVMILMLAVCLLTQADG). Positions 26-31 (KPVKKR) are excised as a propeptide. Positions 51–69 (RMQWLRKKLQDVHNFVSLG) are important for receptor binding. The interval 76–101 (EGSYQRPTKKEENVLVDGNSKSLGEG) is disordered.

Belongs to the parathyroid hormone family. In terms of assembly, interacts with PTH1R (via N-terminal extracellular domain). Hypothalamus and parathyroid gland.

The protein resides in the secreted. In terms of biological role, parathyroid hormone elevates calcium level by dissolving the salts in bone and preventing their renal excretion. Acts by binding to its receptor, PTH1R, activating G protein-coupled receptor signaling. Stimulates [1-14C]-2-deoxy-D-glucose (2DG) transport and glycogen synthesis in osteoblastic cells. In Rattus norvegicus (Rat), this protein is Parathyroid hormone (Pth).